Consider the following 218-residue polypeptide: Ras-related protein Rab-11B (218 aa).

At Gly-2 the chain carries N-acetylglycine. Citrulline is present on Arg-4. GTP-binding residues include Ser-20, Gly-21, Gly-23, Lys-24, Ser-25, Asn-26, Asn-37, Leu-38, Ser-40, Ser-42, and Thr-43. Ser-25 serves as a coordination point for Mg(2+). Residues 36–47 (FNLESKSTIGVE) carry the Switch 1 motif. 2 residues coordinate Mg(2+): Thr-43 and Asp-66. A Switch 2 motif is present at residues 67–86 (TAGQERYRAITSAYYRGAVG). GTP contacts are provided by Gly-69, Asn-124, Lys-125, Asp-127, Ala-155, and Leu-156. The disordered stretch occupies residues 184-218 (RAAHDESPGNNVVDISVPPTTDGQRPNKLQCCQSL). Residues Cys-214 and Cys-215 are each lipidated (S-geranylgeranyl cysteine). Cys-215 bears the Cysteine methyl ester mark. Positions 216–218 (QSL) are cleaved as a propeptide — removed in mature form.

The protein belongs to the small GTPase superfamily. Rab family. As to quaternary structure, interacts with KCNMA1. Interacts with RAB11FIP1, RAB11FIP2, RAB11FIP3 and RAB11FIP4. May interact with TBC1D14. Interacts with ATP6V1E1. Interacts with PI4KB. Interacts (GDP-bound form) with ZFYVE27. Interacts (GDP-bound form) with KIF5A in a ZFYVE27-dependent manner. Interacts with RELCH. Interacts (in GTP-bound form) with TBC1D8B (via domain Rab-GAP TBC). Forms a complex containing RAB11B, ASAP1, Rabin8/RAB3IP, RAP11FIP3 and ARF4. Interacts with WDR44. Mg(2+) is required as a cofactor. Post-translationally, citrullinated by PADI4. Abundantly expressed in brain, heart and testis. Also detected in kidney and pancreatic islets.

The protein localises to the recycling endosome membrane. Its subcellular location is the cytoplasmic vesicle. It localises to the secretory vesicle. It is found in the synaptic vesicle membrane. The protein resides in the phagosome membrane. It catalyses the reaction GTP + H2O = GDP + phosphate + H(+). Regulated by guanine nucleotide exchange factors (GEFs) which promote the exchange of bound GDP for free GTP. Regulated by GTPase activating proteins (GAPs) which increase the GTP hydrolysis activity. Inhibited by GDP dissociation inhibitors (GDIs) which prevent Rab-GDP dissociation. Functionally, the small GTPases Rab are key regulators of intracellular membrane trafficking, from the formation of transport vesicles to their fusion with membranes. Rabs cycle between an inactive GDP-bound form and an active GTP-bound form that is able to recruit to membranes different set of downstream effectors directly responsible for vesicle formation, movement, tethering and fusion. The small Rab GTPase RAB11B plays a role in endocytic recycling, regulating apical recycling of several transmembrane proteins including cystic fibrosis transmembrane conductance regulator/CFTR, epithelial sodium channel/ENaC, potassium voltage-gated channel, and voltage-dependent L-type calcium channel. May also regulate constitutive and regulated secretion, like insulin granule exocytosis. Required for melanosome transport and release from melanocytes. Also regulates V-ATPase intracellular transport in response to extracellular acidosis. Promotes Rabin8/RAB3IP preciliary vesicular trafficking to mother centriole by forming a ciliary targeting complex containing Rab11, ASAP1, Rabin8/RAB3IP, RAB11FIP3 and ARF4, thereby regulating ciliogenesis initiation. On the contrary, upon LPAR1 receptor signaling pathway activation, interaction with phosphorylated WDR44 prevents Rab11-RAB3IP-RAB11FIP3 complex formation and cilia growth. In Mus musculus (Mouse), this protein is Ras-related protein Rab-11B.